A 559-amino-acid chain; its full sequence is Nicotinate phosphoribosyltransferase 1 (559 aa).

Residues Y33 and T221 each contribute to the nicotinate site. H224 is subject to Phosphohistidine. R331 contacts nicotinate. T393 serves as a coordination point for 5-phospho-alpha-D-ribose 1-diphosphate.

The protein belongs to the NAPRTase family. The cofactor is Mg(2+). It depends on Mn(2+) as a cofactor. In terms of processing, transiently phosphorylated on a His residue during the reaction cycle. Phosphorylation strongly increases the affinity for substrates and increases the rate of nicotinate D-ribonucleotide production. Dephosphorylation regenerates the low-affinity form of the enzyme, leading to product release.

It catalyses the reaction nicotinate + 5-phospho-alpha-D-ribose 1-diphosphate + ATP + H2O = nicotinate beta-D-ribonucleotide + ADP + phosphate + diphosphate. The protein operates within cofactor biosynthesis; NAD(+) biosynthesis; nicotinate D-ribonucleotide from nicotinate: step 1/1. Catalyzes the first step in the biosynthesis of NAD from nicotinic acid, the ATP-dependent synthesis of beta-nicotinate D-ribonucleotide from nicotinate and 5-phospho-D-ribose 1-phosphate. Helps prevent cellular oxidative stress via its role in NAD biosynthesis. This is Nicotinate phosphoribosyltransferase 1 from Arabidopsis thaliana (Mouse-ear cress).